The following is a 279-amino-acid chain: Tryptophan 2,3-dioxygenase (279 aa).

Substrate-binding positions include 48-52 (FIVIH), Tyr-110, and Arg-114. His-237 is a heme binding site. A substrate-binding site is contributed by Thr-251.

The protein belongs to the tryptophan 2,3-dioxygenase family. In terms of assembly, homotetramer. It depends on heme as a cofactor.

It carries out the reaction L-tryptophan + O2 = N-formyl-L-kynurenine. It participates in amino-acid degradation; L-tryptophan degradation via kynurenine pathway; L-kynurenine from L-tryptophan: step 1/2. Its function is as follows. Heme-dependent dioxygenase that catalyzes the oxidative cleavage of the L-tryptophan (L-Trp) pyrrole ring and converts L-tryptophan to N-formyl-L-kynurenine. Catalyzes the oxidative cleavage of the indole moiety. This chain is Tryptophan 2,3-dioxygenase, found in Bacillus thuringiensis subsp. konkukian (strain 97-27).